We begin with the raw amino-acid sequence, 468 residues long: Citrate synthase, mitochondrial (468 aa).

The N-terminal 30 residues, 1–30 (MSLITAGRLCARILGAKNSPCALIAARQAS), are a transit peptide targeting the mitochondrion. Catalysis depends on residues His-303 and His-349. Arg-358 provides a ligand contact to oxaloacetate. The active site involves Asp-404. Residues Arg-430 and Arg-450 each coordinate oxaloacetate.

This sequence belongs to the citrate synthase family. As to quaternary structure, homodimer.

It localises to the mitochondrion matrix. It catalyses the reaction oxaloacetate + acetyl-CoA + H2O = citrate + CoA + H(+). It participates in carbohydrate metabolism; tricarboxylic acid cycle; isocitrate from oxaloacetate: step 1/2. Its function is as follows. Key enzyme of the Krebs tricarboxylic acid cycle which catalyzes the synthesis of citrate from acetyl coenzyme A and oxaloacetate. This chain is Citrate synthase, mitochondrial (cs), found in Xenopus tropicalis (Western clawed frog).